The primary structure comprises 1646 residues: Monensin-resistant homolog 2 (1646 aa).

Belongs to the MON2 family.

Its subcellular location is the golgi apparatus. Its function is as follows. May be required for traffic between late Golgi and early endosomes. The chain is Monensin-resistant homolog 2 (mon-2) from Caenorhabditis elegans.